The primary structure comprises 353 residues: Small ribosomal subunit biogenesis GTPase RsgA (353 aa).

Positions 1-24 (MSKNKLSKGQQRRVKANHQRRLKT) are disordered. Over residues 10-23 (QQRRVKANHQRRLK) the composition is skewed to basic residues. Residues 104 to 274 (ASVLTRPDFY…VIDSPGVREF (171 aa)) enclose the CP-type G domain. GTP contacts are provided by residues 160 to 163 (NKID) and 214 to 222 (GQSGVGKSS). Residues Cys-298, Cys-303, His-305, and Cys-311 each contribute to the Zn(2+) site.

This sequence belongs to the TRAFAC class YlqF/YawG GTPase family. RsgA subfamily. In terms of assembly, monomer. Associates with 30S ribosomal subunit, binds 16S rRNA. It depends on Zn(2+) as a cofactor.

The protein resides in the cytoplasm. Functionally, one of several proteins that assist in the late maturation steps of the functional core of the 30S ribosomal subunit. Helps release RbfA from mature subunits. May play a role in the assembly of ribosomal proteins into the subunit. Circularly permuted GTPase that catalyzes slow GTP hydrolysis, GTPase activity is stimulated by the 30S ribosomal subunit. The protein is Small ribosomal subunit biogenesis GTPase RsgA of Klebsiella pneumoniae subsp. pneumoniae (strain ATCC 700721 / MGH 78578).